Here is a 1573-residue protein sequence, read N- to C-terminus: MAEPTKISILGRESIVADCGIWGTYIVQDLLTNLPSTTYVLVTDTNLGSIYREKFAKIFNEAAAALSPAPRLLTKEIPPGENSKSRQGKADIEDWMLQQTCGRDTVIIALGGGVIGDLLGFVAATYMRGIRFVQVPTTLLAMVDSSIGGKTAIDTPLGKNLIGAIWQPHRIYIDIDFIDTLPEREFINGMAEVIKTAAISDEKEFAALEQHADAILKAARSKPGKGRFDLVRQVVKDRIVASARHKAFVVTADEREGGLRNLLNLGHSIGHAIEAILSPQVLHGECVAIGMVKELDLARYLGILKPVAVSRMVKCLSKYGLPTSLKDSRVRKHTAGKHCSLEQMMANMALDKKNDGPRKKVVLLSAIGQTYEPKASVVSNEDIRAVLAPSIEVIPGVPKDLNVVCAPPGSKSISNRALVLAALGSGTVRVKNLLHSDDTEVMLNALERLGAATFAWEDEGEVLVVNGNGGKMQASPTELYLGNAGTASRFLTSVATLSGKGSVDYNILTGNNRMKQRPIGDLVDALTINGAQVEYLEKAGSLPLKIAASGGFKGGRINLAAKVSSQYVSSLLMCAPYAKEPVTLKLVGGRPISLSYIEMTTAMMRSFGIDVQKSTTEEWTYHIPQGSYNNPPEYVIESDASSATYPLAIAAVTGTTCTVPNIGSASLQGDARFAVEVLRPMGCKVEQTATSTTVTGPADGVLRPLPNVDMEPMTDAFLGASVLAAIAQGEGGNHATRIYGIANQRVKECNRIEAMRVELAKFGVVCREHPDGLEIDGIDRSTLRHPAGGVFCYDDHRVAFSFSILSLVAPTPTLILEKECVGKTWPTYWDALKQKFGVSLKGKELAESEITHGPADRSDASIVIIGMRGAGKTTTGRWAAKALNRKFIDLDVELEQTEGKTIPDLIKERGWKGFRDAELSLFKRALTERPTGHVFACGGGIVEIAEARNILIDYHKNKGNVLLVMRDIKKVMEFLNIDKTRPAYIEDMMSVWLRRKPWYQECSNVQYYSRHSSSPELALAMDDFDRFIQFVSGKTDYLAAIRRKRLSFFMSLTLTDLRDSGDLLRTVASGSDAVELRVDLLKDPSSGNGIPSAEYVAEQISFYRSRVSLPIVFTIRTVSQGGKFPNDAHDAALELIMLAIRSGCEFIDLEITFPEDLLRKVAESKAHAKIIASHHDPQGKLNWANGSWIQYYNKALQYGDIIKLVGVAETLKDNTALREFKDWAEQAHPDVPVIAINMGDKGQLSRMLNGFLTPVSHPALPFKAAPGQLSAAEIRKGLSIMGEIPAKKFAIFGKPVSVSRSPAMHNTLFEQNGLPYVYTRLETDQAQDVKEFIRSPDFGGASATIPLKLDIIPLIDEVLNEAEIIGAVNTIIPVEGKDGSTRLIGRNTDWSGIVRCLREAGAHSNEGESSALVIGGGGTARAAIYALHNMGFSTVYVLGRSPEKIQNMASTFPTGFDIRVLENASDIENIPRVAVGTIPGDRPIEANMREILCTIFERSGRAADGKSAAVLLEMAYKPSVTPLMQLASDSGWTTIPGLEALVGQGVYQFEYWTGITPVYEVARNAVLGTDETK.

The tract at residues 1–380 (MAEPTKISIL…YEPKASVVSN (380 aa)) is 3-dehydroquinate synthase. Residues 44 to 46 (DTN), 81 to 84 (ENSK), 112 to 114 (GGV), and Asp117 each bind NAD(+). Arg128 provides a ligand contact to 7-phospho-2-dehydro-3-deoxy-D-arabino-heptonate. Residue 137 to 138 (TT) coordinates NAD(+). Residues Asp144 and Lys150 each contribute to the 7-phospho-2-dehydro-3-deoxy-D-arabino-heptonate site. Lys159 is an NAD(+) binding site. Position 160 (Asn160) interacts with 7-phospho-2-dehydro-3-deoxy-D-arabino-heptonate. Residues 177 to 180 (FIDT) and Asn188 contribute to the NAD(+) site. Position 192 (Glu192) interacts with Zn(2+). Residues 192-195 (EVIK) and Lys246 each bind 7-phospho-2-dehydro-3-deoxy-D-arabino-heptonate. Glu256 acts as the Proton acceptor; for 3-dehydroquinate synthase activity in catalysis. Residues 260–264 (RNLLN) and His267 each bind 7-phospho-2-dehydro-3-deoxy-D-arabino-heptonate. His267 is a Zn(2+) binding site. The active-site Proton acceptor; for 3-dehydroquinate synthase activity is His271. His283 and Lys352 together coordinate 7-phospho-2-dehydro-3-deoxy-D-arabino-heptonate. His283 serves as a coordination point for Zn(2+). Residues 393 to 838 (VIPGVPKDLN…WDALKQKFGV (446 aa)) are EPSP synthase. Residue Cys820 is the For EPSP synthase activity of the active site. The shikimate kinase stretch occupies residues 859–1051 (DASIVIIGMR…RRKRLSFFMS (193 aa)). ATP is bound at residue 866–873 (GMRGAGKT). Positions 1052 to 1273 (LTLTDLRDSG…AAPGQLSAAE (222 aa)) are 3-dehydroquinase. Residue His1175 is the Proton acceptor; for 3-dehydroquinate dehydratase activity of the active site. The active-site Schiff-base intermediate with substrate; for 3-dehydroquinate dehydratase activity is the Lys1203. Positions 1286–1573 (AKKFAIFGKP…NAVLGTDETK (288 aa)) are shikimate dehydrogenase.

The protein in the N-terminal section; belongs to the sugar phosphate cyclases superfamily. Dehydroquinate synthase family. This sequence in the 2nd section; belongs to the EPSP synthase family. It in the 3rd section; belongs to the shikimate kinase family. In the 4th section; belongs to the type-I 3-dehydroquinase family. The protein in the C-terminal section; belongs to the shikimate dehydrogenase family. As to quaternary structure, homodimer. It depends on Zn(2+) as a cofactor.

It localises to the cytoplasm. It carries out the reaction 7-phospho-2-dehydro-3-deoxy-D-arabino-heptonate = 3-dehydroquinate + phosphate. It catalyses the reaction 3-dehydroquinate = 3-dehydroshikimate + H2O. The catalysed reaction is shikimate + NADP(+) = 3-dehydroshikimate + NADPH + H(+). The enzyme catalyses shikimate + ATP = 3-phosphoshikimate + ADP + H(+). It carries out the reaction 3-phosphoshikimate + phosphoenolpyruvate = 5-O-(1-carboxyvinyl)-3-phosphoshikimate + phosphate. It functions in the pathway metabolic intermediate biosynthesis; chorismate biosynthesis; chorismate from D-erythrose 4-phosphate and phosphoenolpyruvate: step 2/7. Its pathway is metabolic intermediate biosynthesis; chorismate biosynthesis; chorismate from D-erythrose 4-phosphate and phosphoenolpyruvate: step 3/7. It participates in metabolic intermediate biosynthesis; chorismate biosynthesis; chorismate from D-erythrose 4-phosphate and phosphoenolpyruvate: step 4/7. The protein operates within metabolic intermediate biosynthesis; chorismate biosynthesis; chorismate from D-erythrose 4-phosphate and phosphoenolpyruvate: step 5/7. It functions in the pathway metabolic intermediate biosynthesis; chorismate biosynthesis; chorismate from D-erythrose 4-phosphate and phosphoenolpyruvate: step 6/7. Its function is as follows. The AROM polypeptide catalyzes 5 consecutive enzymatic reactions in prechorismate polyaromatic amino acid biosynthesis. In Talaromyces marneffei (strain ATCC 18224 / CBS 334.59 / QM 7333) (Penicillium marneffei), this protein is Pentafunctional AROM polypeptide 1.